Reading from the N-terminus, the 879-residue chain is Beta-mannosidase (879 aa).

An N-terminal signal peptide occupies residues 1–19; it reads MHLHLLLILALFRAGCVVA. N-linked (GlcNAc...) asparagine glycosylation is found at Asn35, Asn77, Asn89, and Asn113. Cys167 and Cys176 form a disulfide bridge. 190–192 is a substrate binding site; that stretch reads WDW. Residues Asn226, Asn297, and Asn302 are each glycosylated (N-linked (GlcNAc...) asparagine). Asn456 provides a ligand contact to substrate. The Proton donor role is filled by Glu457. 3 disulfides stabilise this stretch: Cys540–Cys629, Cys732–Cys761, and Cys764–Cys769. Glu554 functions as the Nucleophile in the catalytic mechanism. Asn736 carries an N-linked (GlcNAc...) asparagine glycan. N-linked (GlcNAc...) asparagine glycans are attached at residues Asn803 and Asn807.

This sequence belongs to the glycosyl hydrolase 2 family. In terms of assembly, monomer. As to expression, highest level in liver, high levels in lung, testis, skin and spleen, moderate level in thymus. Activity found in plasma, kidney, liver, spleen, pancreas, brain, testis, epididymis, heart, lung and skeletal muscle.

The protein resides in the lysosome. The catalysed reaction is Hydrolysis of terminal, non-reducing beta-D-mannose residues in beta-D-mannosides.. It functions in the pathway glycan metabolism; N-glycan degradation. Functionally, exoglycosidase that cleaves the single beta-linked mannose residue from the non-reducing end of all N-linked glycoprotein oligosaccharides. In Mus musculus (Mouse), this protein is Beta-mannosidase.